The primary structure comprises 122 residues: Antitoxin protein TsiV3 (122 aa).

The N-terminal stretch at 1 to 24 (MNNLLSAYVTMLLILLSISGGAIA) is a signal peptide. 2 disulfide bridges follow: Cys-28/Cys-41 and Cys-82/Cys-100.

Homodimer; dimerization is critical for inhibitory activity. Forms a heterotetramer with VgrG3 composed of one TsiV3 homodimer and two VgrG3 molecules.

Its function is as follows. Immunity protein that plays a role in preventing early activation of toxin VgrG3. The polypeptide is Antitoxin protein TsiV3 (Vibrio cholerae serotype O1 (strain ATCC 39315 / El Tor Inaba N16961)).